A 132-amino-acid polypeptide reads, in one-letter code: UPF0102 protein LI0223 (132 aa).

The protein belongs to the UPF0102 family.

The polypeptide is UPF0102 protein LI0223 (Lawsonia intracellularis (strain PHE/MN1-00)).